Consider the following 364-residue polypeptide: Dihydroorotase (364 aa).

Zn(2+) contacts are provided by histidine 14, histidine 16, lysine 98, histidine 137, histidine 180, and aspartate 258. Lysine 98 is modified (N6-carboxylysine).

It belongs to the metallo-dependent hydrolases superfamily. DHOase family. Class II DHOase subfamily. It depends on Zn(2+) as a cofactor.

The catalysed reaction is (S)-dihydroorotate + H2O = N-carbamoyl-L-aspartate + H(+). It functions in the pathway pyrimidine metabolism; UMP biosynthesis via de novo pathway; (S)-dihydroorotate from bicarbonate: step 3/3. Catalyzes the conversion of ureidosuccinic acid (USA) to dihydroorotate, the third step of the de novo pyrimidine biosynthetic pathway. The polypeptide is Dihydroorotase (URA4) (Saccharomyces cerevisiae (strain ATCC 204508 / S288c) (Baker's yeast)).